A 138-amino-acid polypeptide reads, in one-letter code: Large ribosomal subunit protein uL16 (138 aa).

Belongs to the universal ribosomal protein uL16 family. As to quaternary structure, part of the 50S ribosomal subunit.

Binds 23S rRNA and is also seen to make contacts with the A and possibly P site tRNAs. This is Large ribosomal subunit protein uL16 from Acidiphilium cryptum (strain JF-5).